A 396-amino-acid chain; its full sequence is Tryptophan synthase beta chain (396 aa).

N6-(pyridoxal phosphate)lysine is present on Lys86.

This sequence belongs to the TrpB family. In terms of assembly, tetramer of two alpha and two beta chains. The cofactor is pyridoxal 5'-phosphate.

It catalyses the reaction (1S,2R)-1-C-(indol-3-yl)glycerol 3-phosphate + L-serine = D-glyceraldehyde 3-phosphate + L-tryptophan + H2O. It participates in amino-acid biosynthesis; L-tryptophan biosynthesis; L-tryptophan from chorismate: step 5/5. Its function is as follows. The beta subunit is responsible for the synthesis of L-tryptophan from indole and L-serine. The sequence is that of Tryptophan synthase beta chain from Francisella tularensis subsp. holarctica (strain FTNF002-00 / FTA).